The following is a 508-amino-acid chain: Anthranilate synthase component 1 (508 aa).

L-tryptophan-binding positions include S51 and 283-285 (PYM). 323–324 (GT) lines the chorismate pocket. E350 is a Mg(2+) binding site. Residues Y438, R458, 477–479 (GAG), and G479 contribute to the chorismate site. Residue E492 coordinates Mg(2+).

This sequence belongs to the anthranilate synthase component I family. As to quaternary structure, heterotetramer consisting of two non-identical subunits: a beta subunit (TrpG) and a large alpha subunit (TrpE). Mg(2+) serves as cofactor.

It carries out the reaction chorismate + L-glutamine = anthranilate + pyruvate + L-glutamate + H(+). It participates in amino-acid biosynthesis; L-tryptophan biosynthesis; L-tryptophan from chorismate: step 1/5. With respect to regulation, feedback inhibited by tryptophan. In terms of biological role, part of a heterotetrameric complex that catalyzes the two-step biosynthesis of anthranilate, an intermediate in the biosynthesis of L-tryptophan. In the first step, the glutamine-binding beta subunit (TrpG) of anthranilate synthase (AS) provides the glutamine amidotransferase activity which generates ammonia as a substrate that, along with chorismate, is used in the second step, catalyzed by the large alpha subunit of AS (TrpE) to produce anthranilate. In the absence of TrpG, TrpE can synthesize anthranilate directly from chorismate and high concentrations of ammonia. This Synechocystis sp. (strain ATCC 27184 / PCC 6803 / Kazusa) protein is Anthranilate synthase component 1 (trpE).